We begin with the raw amino-acid sequence, 439 residues long: MRSTELVQWFRQSTPYVNMHRGKTFVIMLDGNTIASSNFINIINDISLLHSLGIKLIIVYGARVQINSLLAQNNVTSVYHKNIRVTDPRTLELVKQAVGQLSYDITARLSVRLPHSPVLNVVSSNFILAQPIGVDDGVDYMLSGKIRRIEIDNIKHHLDNNAIVLLGPIAPSVTGETFNLPFEEIATQVAIKLKAEKLIGFSSTQGILDPQGISIPDLLPQDAAKYLNQYIQQGEYHCSQARFLQAAIEVCKAGVKRSHLLSYEEDGSLLQELFTRDGVGTQLSVDNSEDIRIATVQDIPGLIELIHPLEQQGILVKRSREQLEMDIANYTIIDRDGVIIACAALNQYPEENMAEMACVAVHPDYRSSSRGDILLEAIQKRARQLGIEKLFVLTTRTVHWFQERGFRLANVEDLPKEKRDHYNYQRRSKILIQPLNEEE.

One can recognise an N-acetyltransferase domain in the interval 289–429 (EDIRIATVQD…DHYNYQRRSK (141 aa)).

This sequence belongs to the acetyltransferase family. ArgA subfamily.

Its subcellular location is the cytoplasm. The enzyme catalyses L-glutamate + acetyl-CoA = N-acetyl-L-glutamate + CoA + H(+). The protein operates within amino-acid biosynthesis; L-arginine biosynthesis; N(2)-acetyl-L-ornithine from L-glutamate: step 1/4. The protein is Amino-acid acetyltransferase of Mannheimia succiniciproducens (strain KCTC 0769BP / MBEL55E).